Consider the following 760-residue polypeptide: MQLNSLGFPRIGRRRELKFALEKYWRGESTQAELHEVARELRRTHWQWQVAAGIEQVPVGDFAFYDQVLTLSATLNAIPDRHRGEGAIDLDTLFRVARGRAPTGTDAPASEMTKYFNTNYHYLVPELKQDQVFSIAYEQFFDEVAEAQALGYKAKPVLLGPVSYLYLAKTVGQDFDKLSLLPNLLKAYAEILARFAAQGVTWVQLEEPILALELTHEWQAAISESYQALKTAQVKILLTSYYGSISHHQALVSALPVAGLHLDLVTAPEQLALFANALRPDQILSVGVVNGRNVWAAEVDLIVERIGSVARDLCSQDGSRLWIGTSCSLLHSPVDLEVETTLAPTLRQQLAFAKQKLLELANVRQLLQAPESVAAKEIVNTCLARREAKAQAADAKVIARVAALTPADYERVSEFTERQAVQQRKYRLPLLPTTTIGSFPQTPAIRGLRSRWRKGELSDAQYTEQLQQVTRDTIDRQLKLGIDVLVHGEAERNDMVEYFGEQLEGVGFTKNGWVQSYGSRCVKPPLIYGDVSRPKAMTVDWAVFAQSLTDKPVKGMLTGPVTILHWSFAREDISRDTIATQLALAIRDEVVDLQHAGIGIIQIDEPAFREGLPLKQSEWQAYLDWAVNAFKLSAAGVVDETQIHTHMCYSEFNDTIAAIAAMDADVITIETSRSRMELLNAFEDFEYPNEIGPGVYDIHSPNTPSVEAMVHLIEKAAQKVPVRQLWVNPDCGLKTRTWDEVEPALKNMVDATRELRRRLG.

Residues 15 to 18 (RELK) and lysine 114 each bind 5-methyltetrahydropteroyltri-L-glutamate. L-homocysteine-binding positions include 436–438 (IGS) and glutamate 489. L-methionine is bound by residues 436–438 (IGS) and glutamate 489. 5-methyltetrahydropteroyltri-L-glutamate contacts are provided by residues 520 to 521 (RC) and tryptophan 566. L-homocysteine is bound at residue aspartate 604. Aspartate 604 serves as a coordination point for L-methionine. Residue glutamate 610 participates in 5-methyltetrahydropteroyltri-L-glutamate binding. Zn(2+) is bound by residues histidine 646, cysteine 648, and glutamate 670. Residue histidine 699 is the Proton donor of the active site. Cysteine 731 contacts Zn(2+).

The protein belongs to the vitamin-B12 independent methionine synthase family. Requires Zn(2+) as cofactor.

It carries out the reaction 5-methyltetrahydropteroyltri-L-glutamate + L-homocysteine = tetrahydropteroyltri-L-glutamate + L-methionine. Its pathway is amino-acid biosynthesis; L-methionine biosynthesis via de novo pathway; L-methionine from L-homocysteine (MetE route): step 1/1. In terms of biological role, catalyzes the transfer of a methyl group from 5-methyltetrahydrofolate to homocysteine resulting in methionine formation. The chain is 5-methyltetrahydropteroyltriglutamate--homocysteine methyltransferase from Shewanella oneidensis (strain ATCC 700550 / JCM 31522 / CIP 106686 / LMG 19005 / NCIMB 14063 / MR-1).